Consider the following 131-residue polypeptide: Small ribosomal subunit protein uS12 (131 aa).

A 3-methylthioaspartic acid modification is found at Asp89.

The protein belongs to the universal ribosomal protein uS12 family. In terms of assembly, part of the 30S ribosomal subunit. Contacts proteins S8 and S17. May interact with IF1 in the 30S initiation complex.

Functionally, with S4 and S5 plays an important role in translational accuracy. In terms of biological role, interacts with and stabilizes bases of the 16S rRNA that are involved in tRNA selection in the A site and with the mRNA backbone. Located at the interface of the 30S and 50S subunits, it traverses the body of the 30S subunit contacting proteins on the other side and probably holding the rRNA structure together. The combined cluster of proteins S8, S12 and S17 appears to hold together the shoulder and platform of the 30S subunit. The polypeptide is Small ribosomal subunit protein uS12 (Karelsulcia muelleri (strain GWSS) (Sulcia muelleri)).